Here is a 215-residue protein sequence, read N- to C-terminus: MSLFGLGRNQKTFRPKKSAPSGTKGAELRKHIDATLGSGNLREAVKLPPGEDLNEWLAVNTVDFFNQVNLLFGTLTEFCTPENCSTMTAGPKYEYRWADGVQIKKPIEVSAPKYVEYLMDWIETQLDDETIFPQKLGAAFPPNFKEVVKTIFKRLFRVYAHIYHSHFQKIVSLKEEAHLNTCFKHFILFTHEFVLIDKKELAPLQELIESIIAPY.

The disordered stretch occupies residues 1–25 (MSLFGLGRNQKTFRPKKSAPSGTKG). Positions 79, 84, 161, and 166 each coordinate Zn(2+).

It belongs to the MOB1/phocein family. In terms of assembly, interacts with SIK1. As to expression, expression is detected along the vasculature in cotyledons, hypocotyls and roots of 3- to 4-day-old seedlings.

In Arabidopsis thaliana (Mouse-ear cress), this protein is MOB kinase activator-like 1B.